The sequence spans 69 residues: MKPNIHPTYYHDAVVRCACGNTFITGSTKKEIRVEICSKCHPFFTGQQKIVDTGGRVERFRKRFNLEEK.

Cys-17, Cys-19, Cys-37, and Cys-40 together coordinate Zn(2+).

It belongs to the bacterial ribosomal protein bL31 family. Type A subfamily. As to quaternary structure, part of the 50S ribosomal subunit. Zn(2+) is required as a cofactor.

Binds the 23S rRNA. This Thermoanaerobacter pseudethanolicus (strain ATCC 33223 / 39E) (Clostridium thermohydrosulfuricum) protein is Large ribosomal subunit protein bL31.